We begin with the raw amino-acid sequence, 631 residues long: Interferon-induced GTP-binding protein Mx1 (631 aa).

Positions 33 to 306 constitute a Dynamin-type G domain; that stretch reads DLALPAIAVI…LTSHICKSLP (274 aa). Residues 43–50 form a G1 motif region; that stretch reads GDQSSGKS. 43–50 is a binding site for GTP; sequence GDQSSGKS. A G2 motif region spans residues 68–70; sequence VTR. Residues 144-147 form a G3 motif region; it reads DLPG. Residues 144–148 and 213–216 each bind GTP; these read DLPGI and TKPD. The G4 motif stretch occupies residues 213–216; the sequence is TKPD. A G5 motif region spans residues 245-248; sequence KCRG. The tract at residues 307–332 is bundle signaling element (BSE); the sequence is LLEDQINSSHQSASEELQKYGADIPE. Residues 332–499 form a middle domain region; it reads EDDRTRMSFL…HFQMEQIVYC (168 aa). Residues 333–601 are stalk; the sequence is DDRTRMSFLV…TSKCSWFLEE (269 aa). The interval 520–522 is critical for lipid-binding; sequence KTK. The 89-residue stretch at 543–631 folds into the GED domain; it reads TTEMTQHLKA…ARQKLAKFSD (89 aa).

The protein belongs to the TRAFAC class dynamin-like GTPase superfamily. Dynamin/Fzo/YdjA family. Homooligomer. Oligomerizes into multimeric filamentous or ring-like structures by virtue of its stalk domain. Oligomerization is critical for GTPase activity, protein stability, and recognition of viral target structures. Interacts with TRPC1, TRPC3, TRPC4, TRPC5, TRPC6 and TRPC7. Interacts with HSPA5. Interacts with TUBB/TUBB5. Interacts with DDX39A and DDX39B. ISGylated.

The protein resides in the cytoplasm. It localises to the nucleus. Its subcellular location is the endoplasmic reticulum membrane. The protein localises to the perinuclear region. In terms of biological role, interferon-induced dynamin-like GTPase with antiviral activity against influenza A virus, (IAV), influenza B virus (IBV) and Thogoto virus (THOV). Inhibits FLUAV by interfering with the process of primary transcription, probably by affecting the viral polymerase function. The sequence is that of Interferon-induced GTP-binding protein Mx1 (Mx1) from Mus musculus (Mouse).